We begin with the raw amino-acid sequence, 214 residues long: Adenylate kinase (214 aa).

An ATP-binding site is contributed by 10–15 (GAGKGT). The segment at 30–59 (STGDMLRAAIKAGSELGNKAKAVMDAGQLV) is NMP. Residues T31, R36, 57 to 59 (QLV), 85 to 88 (GFPR), and Q92 contribute to the AMP site. The segment at 122–159 (GRRVHSGSGRVYHLVYNPPKVEGKDDVSGDDLSIRPDD) is LID. Residues R123 and 132–133 (VY) contribute to the ATP site. R156 and R167 together coordinate AMP. Residue Q200 participates in ATP binding.

This sequence belongs to the adenylate kinase family. In terms of assembly, monomer.

It is found in the cytoplasm. It catalyses the reaction AMP + ATP = 2 ADP. It participates in purine metabolism; AMP biosynthesis via salvage pathway; AMP from ADP: step 1/1. Functionally, catalyzes the reversible transfer of the terminal phosphate group between ATP and AMP. Plays an important role in cellular energy homeostasis and in adenine nucleotide metabolism. The protein is Adenylate kinase of Colwellia psychrerythraea (strain 34H / ATCC BAA-681) (Vibrio psychroerythus).